We begin with the raw amino-acid sequence, 962 residues long: Ubiquitin carboxyl-terminal hydrolase 4 (962 aa).

Residues 11 to 122 (PDVETQKTEL…GQQPIVRKVV (112 aa)) enclose the DUSP domain. Residues 27–216 (TLQRGAQWYL…LYQGQVLVIE (190 aa)) are necessary for interaction with SART3. A Nuclear export signal motif is present at residues 133-141 (VEVYLLELK). A Ubiquitin-like 1 domain is found at 142–226 (LCENSDPTNV…PQNEDGTWPR (85 aa)). A disordered region spans residues 220 to 249 (EDGTWPRQSLQSKSSTAPSRNFTTSSKPSA). Residues 225-249 (PRQSLQSKSSTAPSRNFTTSSKPSA) are compositionally biased toward polar residues. A required for USP4 activation by providing conformational flexibility between the DUSP and catalytic domains region spans residues 229–295 (LQSKSSTAPS…SYNCQEPPSP (67 aa)). Residues 302-922 (CGLGNLGNTC…AAYVLFYQRR (621 aa)) enclose the USP domain. The Nucleophile role is filled by C311. A regulates ubiquitin dissociation region spans residues 384–386 (PQF). A necessary for interaction with RBL2 region spans residues 405-407 (LHE). S445 is subject to Phosphoserine. Residues 459–463 (LVCPE) form a necessary for interaction with RB1 and RBL2 region. Zn(2+)-binding residues include C461 and C464. Residues 483-571 (LKKDRIMEVF…IFVYEVCNTS (89 aa)) form the Ubiquitin-like 2 domain. The segment at 485 to 774 (KDRIMEVFLV…SQPQKKKKAA (290 aa)) is interacts with DUSP and ubiquitin-like 1 domains and is required for USP4 activation. The tract at residues 638-699 (EFLSSPLEPG…SESAQKVKGQ (62 aa)) is disordered. S655 is modified (phosphoserine). The segment covering 657 to 666 (EGDEEEEMDH) has biased composition (acidic residues). 2 positions are modified to phosphoserine: S675 and S680. A Nuclear localization signal motif is present at residues 766-771 (QPQKKK). Zn(2+) contacts are provided by C798 and C801. Residue H880 is the Proton acceptor of the active site. Low complexity predominate over residues 928–937 (STSSLGSFPG). Residues 928–962 (STSSLGSFPGSDGGVKLSSSHQGMGDEEAYNMDTN) are disordered. Positions 952–962 (GDEEAYNMDTN) are enriched in acidic residues.

Belongs to the peptidase C19 family. USP4 subfamily. Interacts with RB1 (both dephosphorylated and hypophosphorylated forms). Interacts with RBL1 and RBL2. Interacts with ADORA2A (via cytoplasmic C-terminus); the interaction is direct. Interacts with SART3; recruits USP4 to its substrate PRPF3. In terms of processing, phosphorylated at Ser-445 by PKB/AKT1 in response to EGF stimulus, promoting its ability deubiquitinate RHEB. Monoubiquitinated by TRIM21. Ubiquitination does not lead to its proteasomal degradation. Autodeubiquitinated. As to expression, expressed in brain, kidney, liver and spleen (at protein level).

It localises to the cytoplasm. Its subcellular location is the nucleus. It catalyses the reaction Thiol-dependent hydrolysis of ester, thioester, amide, peptide and isopeptide bonds formed by the C-terminal Gly of ubiquitin (a 76-residue protein attached to proteins as an intracellular targeting signal).. Its activity is regulated as follows. The completion of the deubiquitinase reaction is mediated by the DUSP and ubiquitin-like 1 domains which promotes the release of ubiquitin from the catalytic site enabling subsequent reactions to occur. Deubiquitinating enzyme that removes conjugated ubiquitin from target proteins. Deubiquitinates PDPK1. Deubiquitinates TRIM21. Deubiquitinates receptor ADORA2A which increases the amount of functional receptor at the cell surface. Deubiquitinates HAS2. Deubiquitinates RHEB in response to EGF signaling, promoting mTORC1 signaling. May regulate mRNA splicing through deubiquitination of the U4 spliceosomal protein PRPF3. This may prevent its recognition by the U5 component PRPF8 thereby destabilizing interactions within the U4/U6.U5 snRNP. May also play a role in the regulation of quality control in the ER. This Mus musculus (Mouse) protein is Ubiquitin carboxyl-terminal hydrolase 4 (Usp4).